A 130-amino-acid chain; its full sequence is Small ribosomal subunit protein bS16 (130 aa).

A compositionally biased stretch (basic and acidic residues) spans 98–109; that stretch reads AAAKQAAKDAAE. The tract at residues 98–130 is disordered; it reads AAAKQAAKDAAEAKAAAAAEAEAPAADAEASEG. Over residues 110–130 the composition is skewed to low complexity; sequence AKAAAAAEAEAPAADAEASEG.

It belongs to the bacterial ribosomal protein bS16 family.

The chain is Small ribosomal subunit protein bS16 from Synechococcus sp. (strain CC9902).